A 177-amino-acid polypeptide reads, in one-letter code: Large ribosomal subunit protein uL6 (177 aa).

Over residues 152–171 (RPPEPYKGKGVRYDDEEVRR) the composition is skewed to basic and acidic residues. Positions 152–177 (RPPEPYKGKGVRYDDEEVRRKEAKKK) are disordered.

It belongs to the universal ribosomal protein uL6 family. In terms of assembly, part of the 50S ribosomal subunit.

This protein binds to the 23S rRNA, and is important in its secondary structure. It is located near the subunit interface in the base of the L7/L12 stalk, and near the tRNA binding site of the peptidyltransferase center. This is Large ribosomal subunit protein uL6 from Shewanella sp. (strain MR-4).